The sequence spans 393 residues: Tryptophan 2,3-dioxygenase (393 aa).

Substrate is bound by residues 56-60 and arginine 127; that span reads FIVTH. Histidine 312 contacts heme. Position 327 (threonine 327) interacts with substrate.

It belongs to the tryptophan 2,3-dioxygenase family. As to quaternary structure, homotetramer. Dimer of dimers. Requires heme as cofactor.

The catalysed reaction is L-tryptophan + O2 = N-formyl-L-kynurenine. The protein operates within amino-acid degradation; L-tryptophan degradation via kynurenine pathway; L-kynurenine from L-tryptophan: step 1/2. It functions in the pathway pigment biosynthesis; ommochrome biosynthesis. Its activity is regulated as follows. Stimulated by low concentrations of hydrogen peroxide (5 uM), ascorbate (0.1-0.3 mM), and sodium hydrosulfite (0.1 mM). Inhibited by high concentrations of hydrogen peroxide (0.1 mM), ascorbate (10 mM), and sodium hydrosulfite (1 mM). Functionally, heme-dependent dioxygenase that catalyzes the oxidative cleavage of the L-tryptophan (L-Trp) pyrrole ring and converts L-tryptophan to N-formyl-L-kynurenine. Catalyzes the oxidative cleavage of the indole moiety. In Aedes aegypti (Yellowfever mosquito), this protein is Tryptophan 2,3-dioxygenase.